The chain runs to 930 residues: Dual serine/threonine and tyrosine protein kinase (930 aa).

Residues 383–428 (RKENELYESLMNIANRKQEEMKDMIIETLSNMKEELLEDAANMEFK) are a coiled coil. In terms of domain architecture, Protein kinase spans 653–907 (PKLGRELGRG…PLLGIVQPML (255 aa)). Residues 659–667 (LGRGQYGVV) and Lys682 contribute to the ATP site. The active-site Proton acceptor is Asp778.

The protein belongs to the protein kinase superfamily. Ser/Thr protein kinase family. In terms of tissue distribution, widely expressed with the highest expression in brain and ovary.

The protein localises to the cytoplasm. It is found in the cell membrane. Its subcellular location is the apical cell membrane. The protein resides in the basolateral cell membrane. It localises to the cell junction. It carries out the reaction L-seryl-[protein] + ATP = O-phospho-L-seryl-[protein] + ADP + H(+). It catalyses the reaction L-threonyl-[protein] + ATP = O-phospho-L-threonyl-[protein] + ADP + H(+). The enzyme catalyses L-tyrosyl-[protein] + ATP = O-phospho-L-tyrosyl-[protein] + ADP + H(+). Its function is as follows. May act as a positive regulator of ERK phosphorylation downstream of fibroblast growth factor-receptor activation. May induce both caspase-dependent apoptosis and caspase-independent cell death. The protein is Dual serine/threonine and tyrosine protein kinase (DSTYK) of Gallus gallus (Chicken).